Here is a 352-residue protein sequence, read N- to C-terminus: Fatty acid synthase (352 aa).

One can recognise a Ketosynthase family 3 (KS3) domain in the interval 1 to 352 (MEDVVIAGIA…KVVLSLEHGL (352 aa)). Residues Cys161, His293, and His331 each act as for beta-ketoacyl synthase activity in the active site.

As to quaternary structure, homodimer which monomers are arranged in a head to tail fashion.

The catalysed reaction is acetyl-CoA + n malonyl-CoA + 2n NADPH + 2n H(+) = a long-chain fatty acid + (n+1) CoA + n CO2 + 2n NADP(+).. Functionally, fatty acid synthetase catalyzes the formation of long-chain fatty acids from acetyl-CoA, malonyl-CoA and NADPH. This multifunctional protein has 7 catalytic activities as an acyl carrier protein. The polypeptide is Fatty acid synthase (FASN) (Anser anser anser (Western greylag goose)).